We begin with the raw amino-acid sequence, 76 residues long: Vasotab-TY1 (76 aa).

The first 21 residues, 1–21 (MKFTLFSVLVVLLIATFVAAD), serve as a signal peptide directing secretion. Residues 22–76 (DCPRICTADFRPVCGTPSGGRRSANRTFGNQCSLDSHNCLNKGDTYDKLHDGECK) form the Kazal-like domain. Disulfide bonds link Cys-23-Cys-60, Cys-27-Cys-53, and Cys-35-Cys-75.

In terms of tissue distribution, expressed by the salivary gland.

The protein resides in the secreted. Functionally, vasodilator protein that inhibits vasoconstriction of isolated rat femoral artery induced by phenylephrine. Since platelet aggregation and vasoconstriction are key hemostatic responses, particularly in small wounds, this protein likely participates in the antihemostatic responses during blood feeding. Blocks L-type calcium channels (Cav1/CACNA1) in left ventricular myocytes isolated from rat hearts. The protein is Vasotab-TY1 of Tabanus yao (Horsefly).